A 403-amino-acid chain; its full sequence is Probable tRNA sulfurtransferase (403 aa).

Residues 61-166 (EAIAESLKDV…SGYSYIMCDE (106 aa)) form the THUMP domain. ATP is bound by residues 184-185 (LL), 209-210 (HF), Arg266, Gly288, and Gln297.

Belongs to the ThiI family.

The protein resides in the cytoplasm. The catalysed reaction is [ThiI sulfur-carrier protein]-S-sulfanyl-L-cysteine + a uridine in tRNA + 2 reduced [2Fe-2S]-[ferredoxin] + ATP + H(+) = [ThiI sulfur-carrier protein]-L-cysteine + a 4-thiouridine in tRNA + 2 oxidized [2Fe-2S]-[ferredoxin] + AMP + diphosphate. It carries out the reaction [ThiS sulfur-carrier protein]-C-terminal Gly-Gly-AMP + S-sulfanyl-L-cysteinyl-[cysteine desulfurase] + AH2 = [ThiS sulfur-carrier protein]-C-terminal-Gly-aminoethanethioate + L-cysteinyl-[cysteine desulfurase] + A + AMP + 2 H(+). Its pathway is cofactor biosynthesis; thiamine diphosphate biosynthesis. Its function is as follows. Catalyzes the ATP-dependent transfer of a sulfur to tRNA to produce 4-thiouridine in position 8 of tRNAs, which functions as a near-UV photosensor. Also catalyzes the transfer of sulfur to the sulfur carrier protein ThiS, forming ThiS-thiocarboxylate. This is a step in the synthesis of thiazole, in the thiamine biosynthesis pathway. The sulfur is donated as persulfide by IscS. The protein is Probable tRNA sulfurtransferase of Bacillus cytotoxicus (strain DSM 22905 / CIP 110041 / 391-98 / NVH 391-98).